The primary structure comprises 498 residues: uncharacterized protein (498 aa).

11 helical membrane-spanning segments follow: residues 54 to 74, 100 to 120, 128 to 148, 150 to 170, 188 to 208, 221 to 241, 302 to 322, 326 to 346, 353 to 373, 381 to 401, and 446 to 466; these read LLKMDLVISPIIGFLYLMAFL, VAVSIFYVLYILVETPSVVLV, MLAFISFAWSMTVLFSGFMSS, GGLIATRLILGLLEGCLFPAL, SYLFASAGLAGAFGGLFAYAL, WIYIVEGLVSFIGVPLCLFAL, VLYGFSSFLPVIIKGLGFVGL, YMTIPVYIAGVISFLFVAWLS, AVYLISASTVVAVGYIIMLAS, TATYIIAIGCYIGPGLNLGWL, and AFTLGCVIVGGLAYVVMFFSL.

This sequence belongs to the major facilitator superfamily. Allantoate permease family.

The protein resides in the membrane. This is an uncharacterized protein from Schizosaccharomyces pombe (strain 972 / ATCC 24843) (Fission yeast).